The following is a 544-amino-acid chain: Light-independent protochlorophyllide reductase subunit B (544 aa).

[4Fe-4S] cluster is bound at residue Asp-36. The active-site Proton donor is the Asp-286. Substrate is bound at residue 421–422 (GM).

This sequence belongs to the ChlB/BchB/BchZ family. Protochlorophyllide reductase is composed of three subunits; BchL, BchN and BchB. Forms a heterotetramer of two BchB and two BchN subunits. Requires [4Fe-4S] cluster as cofactor.

It catalyses the reaction chlorophyllide a + oxidized 2[4Fe-4S]-[ferredoxin] + 2 ADP + 2 phosphate = protochlorophyllide a + reduced 2[4Fe-4S]-[ferredoxin] + 2 ATP + 2 H2O. It participates in porphyrin-containing compound metabolism; bacteriochlorophyll biosynthesis (light-independent). In terms of biological role, component of the dark-operative protochlorophyllide reductase (DPOR) that uses Mg-ATP and reduced ferredoxin to reduce ring D of protochlorophyllide (Pchlide) to form chlorophyllide a (Chlide). This reaction is light-independent. The NB-protein (BchN-BchB) is the catalytic component of the complex. The chain is Light-independent protochlorophyllide reductase subunit B from Chloroflexus aggregans (strain MD-66 / DSM 9485).